The sequence spans 530 residues: Autoinducer-2 kinase (530 aa).

This sequence belongs to the FGGY kinase family.

The protein resides in the cytoplasm. The catalysed reaction is (S)-4,5-dihydroxypentane-2,3-dione + ATP = (2S)-2-hydroxy-3,4-dioxopentyl phosphate + ADP + H(+). Catalyzes the phosphorylation of autoinducer-2 (AI-2) to phospho-AI-2, which subsequently inactivates the transcriptional regulator LsrR and leads to the transcription of the lsr operon. Phosphorylates the ring-open form of (S)-4,5-dihydroxypentane-2,3-dione (DPD), which is the precursor to all AI-2 signaling molecules, at the C5 position. This Salmonella typhimurium (strain LT2 / SGSC1412 / ATCC 700720) protein is Autoinducer-2 kinase.